The chain runs to 962 residues: pH-response regulator protein palF/prr-3 (962 aa).

Disordered stretches follow at residues 1-43 (MGPF…DSST), 225-326 (APPK…THPS), 568-675 (TDSN…PDEN), and 689-962 (RLLP…RYER). A compositionally biased stretch (basic residues) spans 237 to 246 (ISKRAKKKRP). Composition is skewed to polar residues over residues 297–307 (GFSQAPRSVSH), 314–326 (SGDSAASLSTHPS), and 581–596 (PSLTHTPSVTGGSNYV). 2 stretches are compositionally biased toward low complexity: residues 696-722 (PIAAASSSSFSAAVPSPSASSHVPDSS) and 738-747 (PTPAATPATA). The segment covering 793-805 (TEDKQELERRRLL) has biased composition (basic and acidic residues). Over residues 830-839 (AGPSGSRAGP) the composition is skewed to low complexity. The segment covering 840 to 849 (SAPPPAPPVA) has biased composition (pro residues). Low complexity predominate over residues 913–928 (PSSPVLAPASAFFPAS). Positions 929-949 (GSGNVHDSPREQGQQARSDSS) are enriched in polar residues.

It belongs to the arrestin family. PalF/RIM8 subfamily.

Its function is as follows. Required for the proteolytic cleavage of the transcription factor pacc-1 in response to alkaline ambient pH. In Neurospora crassa (strain ATCC 24698 / 74-OR23-1A / CBS 708.71 / DSM 1257 / FGSC 987), this protein is pH-response regulator protein palF/prr-3 (prr-3).